The following is a 272-amino-acid chain: tRNA (guanine-N(7)-)-methyltransferase (272 aa).

Residues 1 to 20 show a composition bias toward basic and acidic residues; it reads MSTDSESKRRAYREEKEGAR. The segment at 1–43 is disordered; sequence MSTDSESKRRAYREEKEGARKKSVKLAPEATPESKPDLPRKRY. S-adenosyl-L-methionine contacts are provided by residues Gly-89, 112–113, 148–149, and Cys-168; these read EI and NA. The active site involves Asp-171. S-adenosyl-L-methionine is bound at residue 246 to 248; it reads TEE.

The protein belongs to the class I-like SAM-binding methyltransferase superfamily. TrmB family. As to quaternary structure, forms a complex with TRM82.

It is found in the nucleus. It carries out the reaction guanosine(46) in tRNA + S-adenosyl-L-methionine = N(7)-methylguanosine(46) in tRNA + S-adenosyl-L-homocysteine. The protein operates within tRNA modification; N(7)-methylguanine-tRNA biosynthesis. Functionally, catalyzes the formation of N(7)-methylguanine at position 46 (m7G46) in tRNA. This Meyerozyma guilliermondii (strain ATCC 6260 / CBS 566 / DSM 6381 / JCM 1539 / NBRC 10279 / NRRL Y-324) (Yeast) protein is tRNA (guanine-N(7)-)-methyltransferase.